The following is a 750-amino-acid chain: Photosystem I P700 chlorophyll a apoprotein A1 (750 aa).

8 helical membrane-spanning segments follow: residues 70–93, 156–179, 195–219, 291–309, 346–369, 385–411, 433–455, and 531–549; these read VFSA…FHGA, LYCT…FHYH, LNHH…HVSL, IAHH…GHMY, WHAQ…HHMY, LSLF…IFMV, AIIS…LYIH, and FLVH…LILL. [4Fe-4S] cluster contacts are provided by cysteine 573 and cysteine 582. The next 2 helical transmembrane spans lie at 589–610 and 664–686; these read HVFL…HFSW and LSAY…MFLF. Histidine 675 serves as a coordination point for chlorophyll a'. The chlorophyll a site is built by methionine 683 and tyrosine 691. Tryptophan 692 serves as a coordination point for phylloquinone. Residues 724–744 traverse the membrane as a helical segment; sequence AVGVTHYLLGGIATTWAFFLA.

Belongs to the PsaA/PsaB family. The PsaA/B heterodimer binds the P700 chlorophyll special pair and subsequent electron acceptors. PSI consists of a core antenna complex that captures photons, and an electron transfer chain that converts photonic excitation into a charge separation. The eukaryotic PSI reaction center is composed of at least 11 subunits. It depends on P700 is a chlorophyll a/chlorophyll a' dimer, A0 is one or more chlorophyll a, A1 is one or both phylloquinones and FX is a shared 4Fe-4S iron-sulfur center. as a cofactor.

It localises to the plastid. Its subcellular location is the chloroplast thylakoid membrane. It carries out the reaction reduced [plastocyanin] + hnu + oxidized [2Fe-2S]-[ferredoxin] = oxidized [plastocyanin] + reduced [2Fe-2S]-[ferredoxin]. Its function is as follows. PsaA and PsaB bind P700, the primary electron donor of photosystem I (PSI), as well as the electron acceptors A0, A1 and FX. PSI is a plastocyanin-ferredoxin oxidoreductase, converting photonic excitation into a charge separation, which transfers an electron from the donor P700 chlorophyll pair to the spectroscopically characterized acceptors A0, A1, FX, FA and FB in turn. Oxidized P700 is reduced on the lumenal side of the thylakoid membrane by plastocyanin. This is Photosystem I P700 chlorophyll a apoprotein A1 from Hordeum vulgare (Barley).